The primary structure comprises 170 residues: Adenine phosphoribosyltransferase (170 aa).

It belongs to the purine/pyrimidine phosphoribosyltransferase family. As to quaternary structure, homodimer.

Its subcellular location is the cytoplasm. The catalysed reaction is AMP + diphosphate = 5-phospho-alpha-D-ribose 1-diphosphate + adenine. It participates in purine metabolism; AMP biosynthesis via salvage pathway; AMP from adenine: step 1/1. Catalyzes a salvage reaction resulting in the formation of AMP, that is energically less costly than de novo synthesis. In Lysinibacillus sphaericus (strain C3-41), this protein is Adenine phosphoribosyltransferase.